Reading from the N-terminus, the 226-residue chain is ATP synthase F(0) complex subunit a (226 aa).

The next 6 membrane-spanning stretches (helical) occupy residues proline 12 to proline 32, tryptophan 68 to leucine 88, glutamine 97 to phenylalanine 117, isoleucine 138 to valine 158, isoleucine 164 to isoleucine 184, and alanine 189 to isoleucine 209.

It belongs to the ATPase A chain family. Component of the ATP synthase complex composed at least of ATP5F1A/subunit alpha, ATP5F1B/subunit beta, ATP5MC1/subunit c (homooctomer), MT-ATP6/subunit a, MT-ATP8/subunit 8, ATP5ME/subunit e, ATP5MF/subunit f, ATP5MG/subunit g, ATP5MK/subunit k, ATP5MJ/subunit j, ATP5F1C/subunit gamma, ATP5F1D/subunit delta, ATP5F1E/subunit epsilon, ATP5PF/subunit F6, ATP5PB/subunit b, ATP5PD/subunit d, ATP5PO/subunit OSCP. ATP synthase complex consists of a soluble F(1) head domain (subunits alpha(3) and beta(3)) - the catalytic core - and a membrane F(0) domain - the membrane proton channel (subunits c, a, 8, e, f, g, k and j). These two domains are linked by a central stalk (subunits gamma, delta, and epsilon) rotating inside the F1 region and a stationary peripheral stalk (subunits F6, b, d, and OSCP). Interacts with DNAJC30; interaction is direct.

It localises to the mitochondrion inner membrane. The catalysed reaction is H(+)(in) = H(+)(out). Subunit a, of the mitochondrial membrane ATP synthase complex (F(1)F(0) ATP synthase or Complex V) that produces ATP from ADP in the presence of a proton gradient across the membrane which is generated by electron transport complexes of the respiratory chain. ATP synthase complex consist of a soluble F(1) head domain - the catalytic core - and a membrane F(1) domain - the membrane proton channel. These two domains are linked by a central stalk rotating inside the F(1) region and a stationary peripheral stalk. During catalysis, ATP synthesis in the catalytic domain of F(1) is coupled via a rotary mechanism of the central stalk subunits to proton translocation. With the subunit c (ATP5MC1), forms the proton-conducting channel in the F(0) domain, that contains two crucial half-channels (inlet and outlet) that facilitate proton movement from the mitochondrial intermembrane space (IMS) into the matrix. Protons are taken up via the inlet half-channel and released through the outlet half-channel, following a Grotthuss mechanism. The sequence is that of ATP synthase F(0) complex subunit a from Halichoerus grypus (Gray seal).